Consider the following 669-residue polypeptide: Cytokinesis protein 2 (669 aa).

The region spanning 1 to 261 is the F-BAR domain; it reads MSYSYEACFW…HLNSFTAADE (261 aa). A coiled-coil region spans residues 134–200; it reads KKGCEVLQKK…LKQEYKASQK (67 aa). Residues S337 and S366 each carry the phosphoserine modification. The interval 372–518 is disordered; sequence VQLQSNVDDS…DYNTRRDTST (147 aa). Basic and acidic residues-rich tracts occupy residues 381–391 and 397–413; these read SVLRQKPDKPR and EQLKPDEDSKNPDEKGL. S421 is subject to Phosphoserine. Composition is skewed to low complexity over residues 421–431 and 445–455; these read SLSSPSESSSS and MESMTTSVSSM. An SH3 domain is found at 599–667; it reads PVIEYAKAMY…PYNFIQLLHQ (69 aa).

In terms of assembly, interacts with INN1.

It localises to the cytoplasm. Its subcellular location is the cytoskeleton. The protein resides in the bud neck. Functionally, throughout most of the cell cycle it forms a double ring that coincides with the septins. After the onset of mitosis, forms a ring-like structure which colocalizes with the medial actin ring. Mediates cytoskeletal rearrangements required for cytokinesis. In conjunction with the medial actin ring exhibits contraction-like action. In Saccharomyces cerevisiae (strain ATCC 204508 / S288c) (Baker's yeast), this protein is Cytokinesis protein 2 (HOF1).